A 320-amino-acid polypeptide reads, in one-letter code: Malate dehydrogenase (320 aa).

Residues 10–15 (GAGQIG) and aspartate 34 contribute to the NAD(+) site. Arginine 83 and arginine 89 together coordinate substrate. Residues asparagine 96 and 119–121 (ITN) contribute to the NAD(+) site. Substrate contacts are provided by asparagine 121 and arginine 152. Histidine 176 serves as the catalytic Proton acceptor.

This sequence belongs to the LDH/MDH superfamily. MDH type 3 family.

It catalyses the reaction (S)-malate + NAD(+) = oxaloacetate + NADH + H(+). Catalyzes the reversible oxidation of malate to oxaloacetate. In Dinoroseobacter shibae (strain DSM 16493 / NCIMB 14021 / DFL 12), this protein is Malate dehydrogenase.